We begin with the raw amino-acid sequence, 42 residues long: Delta-actinopoditoxin-Mb1a (42 aa).

4 disulfide bridges follow: Cys-1/Cys-15, Cys-8/Cys-20, Cys-14/Cys-31, and Cys-16/Cys-42.

This sequence belongs to the neurotoxin 06 (delta-actx) family. Expressed by the venom gland.

Its subcellular location is the secreted. Neurotoxin that slows the inactivation of vertebrate tetrodotoxin-sensitive voltage-gated sodium channels (Nav) and most likely insect sodium channels presumably by binding to site 3 of the channel. Effects are an increase in resting tension, a muscle fasciculation and a decrease in indirect twitch tension. It fails to affect tetrodotoxin-resistant sodium currents. In vivo, is lethal to both vertebrates and insects. The polypeptide is Delta-actinopoditoxin-Mb1a (Missulena bradleyi (Eastern mouse spider)).